A 250-amino-acid chain; its full sequence is NADH-quinone oxidoreductase subunit C (250 aa).

Belongs to the complex I 30 kDa subunit family. In terms of assembly, NDH-1 is composed of 14 different subunits. Subunits NuoB, C, D, E, F, and G constitute the peripheral sector of the complex.

The protein localises to the cell inner membrane. It catalyses the reaction a quinone + NADH + 5 H(+)(in) = a quinol + NAD(+) + 4 H(+)(out). Functionally, NDH-1 shuttles electrons from NADH, via FMN and iron-sulfur (Fe-S) centers, to quinones in the respiratory chain. The immediate electron acceptor for the enzyme in this species is believed to be ubiquinone. Couples the redox reaction to proton translocation (for every two electrons transferred, four hydrogen ions are translocated across the cytoplasmic membrane), and thus conserves the redox energy in a proton gradient. The protein is NADH-quinone oxidoreductase subunit C of Xylella fastidiosa (strain M23).